Consider the following 191-residue polypeptide: Protein Ves (191 aa).

The protein belongs to the Ves family.

This chain is Protein Ves, found in Citrobacter koseri (strain ATCC BAA-895 / CDC 4225-83 / SGSC4696).